The following is a 336-amino-acid chain: ATP-dependent 6-phosphofructokinase (336 aa).

Residue glycine 11 participates in ATP binding. 21–25 (RAVVR) serves as a coordination point for ADP. ATP contacts are provided by residues 72–73 (RY) and 102–105 (GDGS). Residue aspartate 103 participates in Mg(2+) binding. Residue 125 to 127 (TID) coordinates substrate. The active-site Proton acceptor is the aspartate 127. Residue arginine 154 coordinates ADP. Substrate-binding positions include arginine 162 and 169 to 171 (MGR). ADP-binding positions include 185–187 (GAD), lysine 211, and 213–215 (KKH). Residues glutamate 222, arginine 244, and 250–253 (HIQR) contribute to the substrate site.

It belongs to the phosphofructokinase type A (PFKA) family. ATP-dependent PFK group I subfamily. Prokaryotic clade 'B1' sub-subfamily. Homotetramer. Mg(2+) serves as cofactor.

The protein resides in the cytoplasm. The catalysed reaction is beta-D-fructose 6-phosphate + ATP = beta-D-fructose 1,6-bisphosphate + ADP + H(+). The protein operates within carbohydrate degradation; glycolysis; D-glyceraldehyde 3-phosphate and glycerone phosphate from D-glucose: step 3/4. With respect to regulation, allosterically activated by ADP and other diphosphonucleosides, and allosterically inhibited by phosphoenolpyruvate. Functionally, catalyzes the phosphorylation of D-fructose 6-phosphate to fructose 1,6-bisphosphate by ATP, the first committing step of glycolysis. This is ATP-dependent 6-phosphofructokinase from Streptococcus suis (strain 05ZYH33).